The sequence spans 492 residues: Katanin p60 ATPase-containing subunit A1 (492 aa).

Residues 91–158 form a disordered region; it reads PAHDGEVWSL…MKPVRAREKK (68 aa). The span at 138 to 147 shows a compositional bias: polar residues; that stretch reads LPSSKNTNNV. 250–257 contributes to the ATP binding site; the sequence is GPPGTGKT.

This sequence belongs to the AAA ATPase family. Katanin p60 subunit A1 subfamily. Can homooligomerize into hexameric rings, which may be promoted by interaction with microtubules. Interacts with katnb1, which may serve as a targeting subunit.

The protein resides in the cytoplasm. Its subcellular location is the cytoskeleton. It localises to the microtubule organizing center. The protein localises to the centrosome. It is found in the spindle pole. The protein resides in the spindle. It carries out the reaction n ATP + n H2O + a microtubule = n ADP + n phosphate + (n+1) alpha/beta tubulin heterodimers.. ATPase activity is stimulated by microtubules, which promote homooligomerization. ATP-dependent microtubule severing is stimulated by interaction with katnb1. In terms of biological role, catalytic subunit of a complex which severs microtubules in an ATP-dependent manner. Microtubule severing may promote rapid reorganization of cellular microtubule arrays and the release of microtubules from the centrosome following nucleation. The protein is Katanin p60 ATPase-containing subunit A1 (katna1) of Xenopus tropicalis (Western clawed frog).